Here is a 232-residue protein sequence, read N- to C-terminus: U-scoloptoxin(11)-Sa3a (232 aa).

Residues methionine 1–glycine 21 form the signal peptide.

It belongs to the scoloptoxin-11 family. In terms of processing, contains 8 disulfide bonds. In terms of tissue distribution, expressed by the venom gland.

The protein resides in the secreted. The polypeptide is U-scoloptoxin(11)-Sa3a (Scolopendra alternans (Florida Keys giant centipede)).